The sequence spans 309 residues: Mitochondrial import receptor subunit TOM34 (309 aa).

The residue at position 8 (S8) is a Phosphoserine. 3 TPR repeats span residues 9–42 (VEQL…LQAR), 51–84 (SVLY…VPFS), and 86–118 (KPLL…DNSV). The interval 158 to 187 (WSSLPSENHKETAKSKSKETTATKNRVPSA) is disordered. S160 carries the post-translational modification Phosphoserine. The segment covering 164-178 (ENHKETAKSKSKETT) has biased composition (basic and acidic residues). The residue at position 186 (S186) is a Phosphoserine. TPR repeat units lie at residues 193–226 (ARVL…SSLE), 227–260 (SATY…DGKN), and 262–294 (KAFY…EPRN). K197 is covalently cross-linked (Glycyl lysine isopeptide (Lys-Gly) (interchain with G-Cter in SUMO2)).

This sequence belongs to the Tom34 family. As to quaternary structure, interacts with HSP90A, VCP, ATP6V1D, KIAA0665, AMPK, and DMAP1 through its TPR repeat.

It localises to the cytoplasm. The protein localises to the mitochondrion outer membrane. In terms of biological role, plays a role in the import of cytosolically synthesized preproteins into mitochondria. Binds the mature portion of precursor proteins. Interacts with cellular components, and possesses weak ATPase activity. May be a chaperone-like protein that helps to keep newly synthesized precursors in an unfolded import compatible state. In Rattus norvegicus (Rat), this protein is Mitochondrial import receptor subunit TOM34 (Tomm34).